Here is a 339-residue protein sequence, read N- to C-terminus: ATPase GET3 (339 aa).

Residue 37–44 (KGGVGKTT) coordinates ATP. Aspartate 66 is an active-site residue. Residues glutamate 237 and asparagine 264 each contribute to the ATP site. Zn(2+)-binding residues include cysteine 275 and cysteine 278.

Belongs to the arsA ATPase family. Homodimer.

The protein resides in the cytoplasm. It is found in the endoplasmic reticulum. Functionally, ATPase required for the post-translational delivery of tail-anchored (TA) proteins to the endoplasmic reticulum. Recognizes and selectively binds the transmembrane domain of TA proteins in the cytosol. This complex then targets to the endoplasmic reticulum by membrane-bound receptors, where the tail-anchored protein is released for insertion. This process is regulated by ATP binding and hydrolysis. ATP binding drives the homodimer towards the closed dimer state, facilitating recognition of newly synthesized TA membrane proteins. ATP hydrolysis is required for insertion. Subsequently, the homodimer reverts towards the open dimer state, lowering its affinity for the membrane-bound receptor, and returning it to the cytosol to initiate a new round of targeting. The polypeptide is ATPase GET3 (Rhodotorula glutinis (Yeast)).